We begin with the raw amino-acid sequence, 343 residues long: Anthranilate phosphoribosyltransferase (343 aa).

5-phospho-alpha-D-ribose 1-diphosphate contacts are provided by residues glycine 84, 87–88, threonine 92, 94–97, 112–120, and serine 124; these read GD, NIST, and KHGNRGVSS. Residue glycine 84 participates in anthranilate binding. Serine 96 is a Mg(2+) binding site. Asparagine 115 contributes to the anthranilate binding site. Arginine 170 provides a ligand contact to anthranilate. Mg(2+) is bound by residues aspartate 229 and glutamate 230.

It belongs to the anthranilate phosphoribosyltransferase family. Homodimer. Mg(2+) is required as a cofactor.

It catalyses the reaction N-(5-phospho-beta-D-ribosyl)anthranilate + diphosphate = 5-phospho-alpha-D-ribose 1-diphosphate + anthranilate. Its pathway is amino-acid biosynthesis; L-tryptophan biosynthesis; L-tryptophan from chorismate: step 2/5. Functionally, catalyzes the transfer of the phosphoribosyl group of 5-phosphorylribose-1-pyrophosphate (PRPP) to anthranilate to yield N-(5'-phosphoribosyl)-anthranilate (PRA). The sequence is that of Anthranilate phosphoribosyltransferase from Burkholderia cenocepacia (strain ATCC BAA-245 / DSM 16553 / LMG 16656 / NCTC 13227 / J2315 / CF5610) (Burkholderia cepacia (strain J2315)).